Consider the following 363-residue polypeptide: NAD(P)H-quinone oxidoreductase subunit 1, chloroplastic (363 aa).

6 helical membrane passes run 30–50 (LVPI…IVWL), 98–118 (FSIG…VIPF), 129–149 (IGIF…LMSG), 248–268 (YSGI…LLSS), 300–320 (IIGT…FLFI), and 343–363 (FLLP…LLSL).

This sequence belongs to the complex I subunit 1 family. As to quaternary structure, NDH is composed of at least 16 different subunits, 5 of which are encoded in the nucleus.

It is found in the plastid. The protein localises to the chloroplast thylakoid membrane. It carries out the reaction a plastoquinone + NADH + (n+1) H(+)(in) = a plastoquinol + NAD(+) + n H(+)(out). The catalysed reaction is a plastoquinone + NADPH + (n+1) H(+)(in) = a plastoquinol + NADP(+) + n H(+)(out). NDH shuttles electrons from NAD(P)H:plastoquinone, via FMN and iron-sulfur (Fe-S) centers, to quinones in the photosynthetic chain and possibly in a chloroplast respiratory chain. The immediate electron acceptor for the enzyme in this species is believed to be plastoquinone. Couples the redox reaction to proton translocation, and thus conserves the redox energy in a proton gradient. This Gossypium barbadense (Sea Island cotton) protein is NAD(P)H-quinone oxidoreductase subunit 1, chloroplastic.